The chain runs to 464 residues: Kynureninase 2 (464 aa).

Residues leucine 135, threonine 136, 163 to 166 (FPSD), aspartate 248, histidine 251, and tyrosine 273 contribute to the pyridoxal 5'-phosphate site. Lysine 274 carries the N6-(pyridoxal phosphate)lysine modification. Residues tryptophan 313 and asparagine 341 each coordinate pyridoxal 5'-phosphate.

The protein belongs to the kynureninase family. Homodimer. The cofactor is pyridoxal 5'-phosphate.

Its subcellular location is the cytoplasm. The enzyme catalyses L-kynurenine + H2O = anthranilate + L-alanine + H(+). The catalysed reaction is 3-hydroxy-L-kynurenine + H2O = 3-hydroxyanthranilate + L-alanine + H(+). Its pathway is amino-acid degradation; L-kynurenine degradation; L-alanine and anthranilate from L-kynurenine: step 1/1. The protein operates within cofactor biosynthesis; NAD(+) biosynthesis; quinolinate from L-kynurenine: step 2/3. Catalyzes the cleavage of L-kynurenine (L-Kyn) and L-3-hydroxykynurenine (L-3OHKyn) into anthranilic acid (AA) and 3-hydroxyanthranilic acid (3-OHAA), respectively. The sequence is that of Kynureninase 2 (bna5-2) from Aspergillus clavatus (strain ATCC 1007 / CBS 513.65 / DSM 816 / NCTC 3887 / NRRL 1 / QM 1276 / 107).